A 427-amino-acid chain; its full sequence is Serine hydroxymethyltransferase (427 aa).

(6S)-5,6,7,8-tetrahydrofolate is bound by residues Leu-122 and 126 to 128 (GHL). An N6-(pyridoxal phosphate)lysine modification is found at Lys-231. A (6S)-5,6,7,8-tetrahydrofolate-binding site is contributed by 355 to 357 (SPF).

This sequence belongs to the SHMT family. In terms of assembly, homodimer. The cofactor is pyridoxal 5'-phosphate.

It localises to the cytoplasm. The catalysed reaction is (6R)-5,10-methylene-5,6,7,8-tetrahydrofolate + glycine + H2O = (6S)-5,6,7,8-tetrahydrofolate + L-serine. It functions in the pathway one-carbon metabolism; tetrahydrofolate interconversion. The protein operates within amino-acid biosynthesis; glycine biosynthesis; glycine from L-serine: step 1/1. In terms of biological role, catalyzes the reversible interconversion of serine and glycine with tetrahydrofolate (THF) serving as the one-carbon carrier. This reaction serves as the major source of one-carbon groups required for the biosynthesis of purines, thymidylate, methionine, and other important biomolecules. Also exhibits THF-independent aldolase activity toward beta-hydroxyamino acids, producing glycine and aldehydes, via a retro-aldol mechanism. The chain is Serine hydroxymethyltransferase from Nostoc punctiforme (strain ATCC 29133 / PCC 73102).